Consider the following 500-residue polypeptide: Glutamate decarboxylase 3 (500 aa).

Phosphoserine is present on Ser-8. Residue Lys-277 is modified to N6-(pyridoxal phosphate)lysine.

Belongs to the group II decarboxylase family. As to quaternary structure, homohexamer. Interacts with calmodulin. It depends on pyridoxal 5'-phosphate as a cofactor. Expressed at low levels in siliques.

The catalysed reaction is L-glutamate + H(+) = 4-aminobutanoate + CO2. Its function is as follows. Catalyzes the production of GABA. The calmodulin-binding is calcium-dependent and it is proposed that this may, directly or indirectly, form a calcium regulated control of GABA biosynthesis. The chain is Glutamate decarboxylase 3 (GAD3) from Arabidopsis thaliana (Mouse-ear cress).